The primary structure comprises 488 residues: Katanin p60 ATPase-containing subunit A-like 1 (488 aa).

The residue at position 1 (M1) is an N-acetylmethionine. A disordered region spans residues 128 to 179; the sequence is GAGARGLVGRAHQISKSDKAASRDKDYRARGRDDKARKNMQDGASDGEIPKF. Residues 142–167 show a composition bias toward basic and acidic residues; sequence SKSDKAASRDKDYRARGRDDKARKNM. S172 carries the phosphoserine modification. 246-253 provides a ligand contact to ATP; it reads GPPGTGKT.

Belongs to the AAA ATPase family. Katanin p60 subunit A1 subfamily. A-like 1 sub-subfamily. In terms of assembly, interacts with KATNB1 and KATNBL1.

The protein resides in the cytoplasm. The protein localises to the cytoskeleton. Its subcellular location is the spindle pole. It localises to the spindle. It carries out the reaction n ATP + n H2O + a microtubule = n ADP + n phosphate + (n+1) alpha/beta tubulin heterodimers.. Regulates microtubule dynamics in Sertoli cells, a process that is essential for spermiogenesis and male fertility. Severs microtubules in an ATP-dependent manner, promoting rapid reorganization of cellular microtubule arrays. Has microtubule-severing activity in vitro. In Rattus norvegicus (Rat), this protein is Katanin p60 ATPase-containing subunit A-like 1 (Katnal1).